A 198-amino-acid polypeptide reads, in one-letter code: FMN-dependent NADH:quinone oxidoreductase (198 aa).

An FMN-binding site is contributed by 96 to 99 (MYNF).

The protein belongs to the azoreductase type 1 family. Homodimer. FMN serves as cofactor.

The catalysed reaction is 2 a quinone + NADH + H(+) = 2 a 1,4-benzosemiquinone + NAD(+). It carries out the reaction N,N-dimethyl-1,4-phenylenediamine + anthranilate + 2 NAD(+) = 2-(4-dimethylaminophenyl)diazenylbenzoate + 2 NADH + 2 H(+). Quinone reductase that provides resistance to thiol-specific stress caused by electrophilic quinones. Its function is as follows. Also exhibits azoreductase activity. Catalyzes the reductive cleavage of the azo bond in aromatic azo compounds to the corresponding amines. In Burkholderia mallei (strain ATCC 23344), this protein is FMN-dependent NADH:quinone oxidoreductase.